The sequence spans 138 residues: Gastrula zinc finger protein XlCGF44.2 (138 aa).

C2H2-type zinc fingers lie at residues Phe-5–His-27, Phe-32–His-54, Phe-60–His-82, Tyr-88–His-110, and Phe-116–His-138.

The protein belongs to the krueppel C2H2-type zinc-finger protein family.

The protein resides in the nucleus. In terms of biological role, may be involved in transcriptional regulation. The chain is Gastrula zinc finger protein XlCGF44.2 from Xenopus laevis (African clawed frog).